A 327-amino-acid chain; its full sequence is Malate dehydrogenase (327 aa).

Position 11-17 (11-17 (GAAGQIG)) interacts with NAD(+). Substrate-binding residues include arginine 92 and arginine 98. Residues asparagine 105, glutamine 112, and 129–131 (VGN) each bind NAD(+). Substrate-binding residues include asparagine 131 and arginine 162. Residue histidine 187 is the Proton acceptor of the active site.

The protein belongs to the LDH/MDH superfamily. MDH type 2 family.

It carries out the reaction (S)-malate + NAD(+) = oxaloacetate + NADH + H(+). In terms of biological role, catalyzes the reversible oxidation of malate to oxaloacetate. In Leptospira biflexa serovar Patoc (strain Patoc 1 / Ames), this protein is Malate dehydrogenase.